The primary structure comprises 280 residues: Ribosomal RNA-processing protein 7 homolog A (280 aa).

Residues 1–10 (MVSRRKKRKA) are compositionally biased toward basic residues. The tract at residues 1 to 24 (MVSRRKKRKAGGHEESIPSPPGYS) is disordered. The region spanning 59-159 (RTLFILNVPP…SGIHKWISDY (101 aa)) is the RRM domain. At S99 the chain carries Phosphoserine.

Belongs to the RRP7 family. Part of the small subunit (SSU) processome, composed of more than 70 proteins and the RNA chaperone small nucleolar RNA (snoRNA) U3. Interacts with NOL6; required for NOL6 localization to nucleolus.

It is found in the nucleus. It localises to the nucleolus. Its subcellular location is the cell projection. The protein resides in the cilium. The protein localises to the cytoplasm. It is found in the cytoskeleton. It localises to the microtubule organizing center. Its subcellular location is the centrosome. Nucleolar protein that is involved in ribosomal RNA (rRNA) processing. Also plays a role in primary cilia resorption, and cell cycle progression in neurogenesis and neocortex development. Part of the small subunit (SSU) processome, first precursor of the small eukaryotic ribosomal subunit. During the assembly of the SSU processome in the nucleolus, many ribosome biogenesis factors, an RNA chaperone and ribosomal proteins associate with the nascent pre-rRNA and work in concert to generate RNA folding, modifications, rearrangements and cleavage as well as targeted degradation of pre-ribosomal RNA by the RNA exosome. The chain is Ribosomal RNA-processing protein 7 homolog A (Rrp7a) from Mus musculus (Mouse).